We begin with the raw amino-acid sequence, 194 residues long: Protein GrpE (194 aa).

The span at 1 to 13 shows a compositional bias: polar residues; it reads MENTQENPTSQNP. The tract at residues 1–50 is disordered; the sequence is MENTQENPTSQNPKPAEETARQAAEAAAPQQEAAANAATDSPASAEQAAL. Residues 21 to 50 show a composition bias toward low complexity; that stretch reads RQAAEAAAPQQEAAANAATDSPASAEQAAL.

Belongs to the GrpE family. Homodimer.

Its subcellular location is the cytoplasm. Functionally, participates actively in the response to hyperosmotic and heat shock by preventing the aggregation of stress-denatured proteins, in association with DnaK and GrpE. It is the nucleotide exchange factor for DnaK and may function as a thermosensor. Unfolded proteins bind initially to DnaJ; upon interaction with the DnaJ-bound protein, DnaK hydrolyzes its bound ATP, resulting in the formation of a stable complex. GrpE releases ADP from DnaK; ATP binding to DnaK triggers the release of the substrate protein, thus completing the reaction cycle. Several rounds of ATP-dependent interactions between DnaJ, DnaK and GrpE are required for fully efficient folding. This chain is Protein GrpE, found in Paraburkholderia xenovorans (strain LB400).